The primary structure comprises 373 residues: Saccharopine dehydrogenase [NAD(+), L-lysine-forming] (373 aa).

At Ala-2 the chain carries N-acetylalanine; partial. L-saccharopine-binding residues include Arg-18 and Lys-77. Lys-77 acts as the Proton acceptor in catalysis. The Proton donor role is filled by His-96. An L-saccharopine-binding site is contributed by Gln-101. Residue Arg-130 participates in NAD(+) binding. Residues Arg-131 and Phe-135 each coordinate L-saccharopine. NAD(+) is bound by residues Gly-203–Arg-204, Asp-227, Thr-231, Tyr-251, and Val-278. A disulfide bridge links Cys-205 with Cys-249. Position 279–281 (Ser-279–Asp-281) interacts with L-saccharopine. Residue Ile-318–Leu-321 participates in NAD(+) binding. Residues Ser-371–Leu-373 carry the Microbody targeting signal motif.

This sequence belongs to the AlaDH/PNT family. In terms of assembly, monomer.

It is found in the peroxisome. The catalysed reaction is L-saccharopine + NAD(+) + H2O = L-lysine + 2-oxoglutarate + NADH + H(+). Its pathway is amino-acid biosynthesis; L-lysine biosynthesis via AAA pathway; L-lysine from L-alpha-aminoadipate (fungal route): step 3/3. Its activity is regulated as follows. Inhibited by p-chloromercuribenzoate and iodoacetate by modification of the active site cysteine residue. Inhibited by diethyl pyrocarbonate by modification of histidine residues. Inhibited by pyridoxal 5'-phosphate by modification of an essential lysine residue. Catalyzes the NAD(+)-dependent cleavage of saccharopine to L-lysine and 2-oxoglutarate, the final step in the alpha-aminoadipate (AAA) pathway for lysine biosynthesis. In Saccharomyces cerevisiae (strain ATCC 204508 / S288c) (Baker's yeast), this protein is Saccharopine dehydrogenase [NAD(+), L-lysine-forming].